A 450-amino-acid chain; its full sequence is Ribosomal protein uS12 methylthiotransferase RimO (450 aa).

The region spanning 10–125 (SRIALVSLGC…VVDIVRRAAT (116 aa)) is the MTTase N-terminal domain. Positions 19, 54, 88, 162, 166, and 169 each coordinate [4Fe-4S] cluster. Residues 148–378 (SGSPFTAYLK…AAVQREVSRA (231 aa)) enclose the Radical SAM core domain. Residues 381 to 447 (RARVGSEVTV…PYDLRARVLS (67 aa)) form the TRAM domain.

This sequence belongs to the methylthiotransferase family. RimO subfamily. [4Fe-4S] cluster is required as a cofactor.

The protein localises to the cytoplasm. It catalyses the reaction L-aspartate(89)-[ribosomal protein uS12]-hydrogen + (sulfur carrier)-SH + AH2 + 2 S-adenosyl-L-methionine = 3-methylsulfanyl-L-aspartate(89)-[ribosomal protein uS12]-hydrogen + (sulfur carrier)-H + 5'-deoxyadenosine + L-methionine + A + S-adenosyl-L-homocysteine + 2 H(+). Catalyzes the methylthiolation of an aspartic acid residue of ribosomal protein uS12. The chain is Ribosomal protein uS12 methylthiotransferase RimO from Desulforudis audaxviator (strain MP104C).